A 304-amino-acid chain; its full sequence is GTP cyclohydrolase FolE2 (304 aa).

It belongs to the GTP cyclohydrolase IV family.

It catalyses the reaction GTP + H2O = 7,8-dihydroneopterin 3'-triphosphate + formate + H(+). Its pathway is cofactor biosynthesis; 7,8-dihydroneopterin triphosphate biosynthesis; 7,8-dihydroneopterin triphosphate from GTP: step 1/1. Its function is as follows. Converts GTP to 7,8-dihydroneopterin triphosphate. This chain is GTP cyclohydrolase FolE2, found in Bdellovibrio bacteriovorus (strain ATCC 15356 / DSM 50701 / NCIMB 9529 / HD100).